A 478-amino-acid polypeptide reads, in one-letter code: MKLLFIAAEGAPFAKTGGLGDVIGALPKSLAKNGNEIAVILPYYDVIDQQFGNQVKDLFYFYTNVGWRHQYVGIKEMIRDNVTFYFIDNRDYFFRGHIYGDWDDGERFAYFQLAALEAMEKINFIPDVLHVHDYHTAMIPFLLKEKYHWIQAYQKIRTVFTIHNIEFQGQFGPGMLGDLFGVGLERYEDGTLRWNNCLNWMKAGVLYADRVTTVSPSYANEIQTVAFGKGLDQVMRMESGKLSGIVNGIDTELYNPENDPHVTFPFSINDLSGKAKNKKELQEQLGLPVNENIPLIGIVSRLTDQKGFDILVSELESILQQDLQMVVLGTGYQQYEEAFRWFANCYPEKLSANITFDIGLAQKIYASSDMFLMPSAFEPCGLSQMMAMRYGTLPIVHEIGGLKDTVEPFNPFDKTGTGFGFNHFSGFWMTNTLLFALDIFHNHKEDWQAIQKNAMSADFSWDTASLAYEKLYMDLKLF.

An ADP-alpha-D-glucose-binding site is contributed by K15.

It belongs to the glycosyltransferase 1 family. Bacterial/plant glycogen synthase subfamily.

It carries out the reaction [(1-&gt;4)-alpha-D-glucosyl](n) + ADP-alpha-D-glucose = [(1-&gt;4)-alpha-D-glucosyl](n+1) + ADP + H(+). It functions in the pathway glycan biosynthesis; glycogen biosynthesis. Synthesizes alpha-1,4-glucan chains using ADP-glucose. The sequence is that of Glycogen synthase from Streptococcus uberis (strain ATCC BAA-854 / 0140J).